Consider the following 134-residue polypeptide: Arsenate reductase 2 (134 aa).

Active-site nucleophile residues include cysteine 11, cysteine 83, and cysteine 90. Disulfide bonds link cysteine 11/cysteine 83 and cysteine 83/cysteine 90.

The protein belongs to the low molecular weight phosphotyrosine protein phosphatase family. Thioredoxin-coupled ArsC subfamily.

It localises to the cytoplasm. The catalysed reaction is arsenate + [thioredoxin]-dithiol + H(+) = arsenite + [thioredoxin]-disulfide + H2O. In terms of biological role, catalyzes the reduction of arsenate [As(V)] to arsenite [As(III)]. The protein is Arsenate reductase 2 of Bacillus cereus (strain ATCC 10987 / NRS 248).